The sequence spans 198 residues: Large ribosomal subunit protein uL5 (198 aa).

Belongs to the universal ribosomal protein uL5 family. Part of the 50S ribosomal subunit; part of the 5S rRNA/L5/L18/L25 subcomplex. Contacts the 5S rRNA and the P site tRNA. Forms a bridge to the 30S subunit in the 70S ribosome.

Functionally, this is one of the proteins that bind and probably mediate the attachment of the 5S RNA into the large ribosomal subunit, where it forms part of the central protuberance. In the 70S ribosome it contacts protein S13 of the 30S subunit (bridge B1b), connecting the 2 subunits; this bridge is implicated in subunit movement. Contacts the P site tRNA; the 5S rRNA and some of its associated proteins might help stabilize positioning of ribosome-bound tRNAs. The chain is Large ribosomal subunit protein uL5 from Chlorobium phaeovibrioides (strain DSM 265 / 1930) (Prosthecochloris vibrioformis (strain DSM 265)).